Here is a 156-residue protein sequence, read N- to C-terminus: Protein OXIDATIVE STRESS 3 LIKE 3 (156 aa).

Residues 1–67 form a disordered region; that stretch reads MHYQEQMESL…GLSKHYKGKS (67 aa). The segment covering 13–26 has biased composition (basic and acidic residues); the sequence is GEERRRGNYTRDVD.

The protein localises to the nucleus. Its function is as follows. Promotes slightly the tolerance to oxidizing chemicals (e.g. diamide). This chain is Protein OXIDATIVE STRESS 3 LIKE 3, found in Arabidopsis thaliana (Mouse-ear cress).